We begin with the raw amino-acid sequence, 606 residues long: RUN and FYVE domain-containing protein 2 (606 aa).

An RUN domain is found at 37 to 169 (DSDYPPLQQF…IDANLCVKGE (133 aa)). A coiled-coil region spans residues 210-534 (EELNRQLNST…IKEANKALQG (325 aa)). The FYVE-type zinc-finger motif lies at 540–598 (DKEATHCKLCEKEFSLSKRKHHCRNCGEIFCNACSDNELPLPSSPKPVRVCDSCHALLI). 8 residues coordinate Zn(2+): Cys-546, Cys-549, Cys-562, Cys-565, Cys-570, Cys-573, Cys-590, and Cys-593.

In terms of assembly, interacts with BMX.

The protein localises to the nucleus. The chain is RUN and FYVE domain-containing protein 2 (RUFY2) from Pongo abelii (Sumatran orangutan).